The following is a 387-amino-acid chain: Large ribosomal subunit protein uL3 (387 aa).

Belongs to the universal ribosomal protein uL3 family.

Its subcellular location is the cytoplasm. The protein is Large ribosomal subunit protein uL3 (RPL3) of Eremothecium gossypii (strain ATCC 10895 / CBS 109.51 / FGSC 9923 / NRRL Y-1056) (Yeast).